The sequence spans 222 residues: Ribonuclease S-3 (222 aa).

The first 22 residues, 1-22, serve as a signal peptide directing secretion; the sequence is MVHVVMMVFLLIVLILCSSTVG. Gln-31 contributes to the RNA binding site. Cysteines 37 and 44 form a disulfide. Asn-40 is a glycosylation site (N-linked (GlcNAc...) asparagine). RNA-binding positions include His-55, 92 to 93, Phe-102, 105 to 106, and 109 to 110; these read NV, KE, and KH. His-55 functions as the Proton donor in the catalytic mechanism. An intrachain disulfide couples Cys-70 to Cys-113. Catalysis depends on residues Glu-106 and Lys-109. His-110 serves as the catalytic Proton acceptor. Residue Asn-138 is glycosylated (N-linked (GlcNAc...) asparagine). Intrachain disulfides connect Cys-177/Cys-215 and Cys-192/Cys-203.

Belongs to the RNase T2 family. In terms of processing, N-linked core structure at Asn-138 contains xylose.

It catalyses the reaction a ribonucleotidyl-ribonucleotide-RNA + H2O = a 3'-end 3'-phospho-ribonucleotide-RNA + a 5'-end dephospho-ribonucleoside-RNA + H(+). Functionally, self-incompatibility (SI) is the inherited ability of a flowering plant to prevent self-fertilization by discriminating between self and non-self pollen during pollination. In many species, self-incompatibility is controlled by the single, multiallelic locus S. This Pyrus pyrifolia (Chinese pear) protein is Ribonuclease S-3.